The following is a 355-amino-acid chain: uncharacterized protein (355 aa).

Residues leucine 6–alanine 26 traverse the membrane as a helical segment.

It belongs to the SUN family.

It is found in the membrane. This is an uncharacterized protein from Saccharomyces cerevisiae (strain ATCC 204508 / S288c) (Baker's yeast).